Reading from the N-terminus, the 147-residue chain is Large ribosomal subunit protein uL13 (147 aa).

It belongs to the universal ribosomal protein uL13 family. In terms of assembly, part of the 50S ribosomal subunit.

This protein is one of the early assembly proteins of the 50S ribosomal subunit, although it is not seen to bind rRNA by itself. It is important during the early stages of 50S assembly. The polypeptide is Large ribosomal subunit protein uL13 (Micrococcus luteus (strain ATCC 4698 / DSM 20030 / JCM 1464 / CCM 169 / CCUG 5858 / IAM 1056 / NBRC 3333 / NCIMB 9278 / NCTC 2665 / VKM Ac-2230) (Micrococcus lysodeikticus)).